Reading from the N-terminus, the 91-residue chain is Ice-structuring protein (91 aa).

The N-terminal stretch at 1–21 is a signal peptide; the sequence is MALSLFTVGQLIFLFWTMRIT. Positions 22–39 are cleaved as a propeptide — removed by a dipeptidylpeptidase; the sequence is EANPDPAAKAVPAAAAPD.

This sequence belongs to the type-I AFP family.

It localises to the secreted. Contributes to protect fish blood from freezing at subzero sea water temperatures. Lowers the blood freezing point. Binds to nascent ice crystals and prevents further growth. The sequence is that of Ice-structuring protein from Pseudopleuronectes americanus (Winter flounder).